The sequence spans 224 residues: Ribonuclease T (224 aa).

The Exonuclease domain maps to 20-194; sequence VVIDVETAGF…YDTERTAELF (175 aa). Positions 23, 25, 181, and 186 each coordinate Mg(2+). Catalysis depends on His-181, which acts as the Proton donor/acceptor.

Belongs to the RNase T family. Homodimer. Mg(2+) serves as cofactor.

Functionally, trims short 3' overhangs of a variety of RNA species, leaving a one or two nucleotide 3' overhang. Responsible for the end-turnover of tRNA: specifically removes the terminal AMP residue from uncharged tRNA (tRNA-C-C-A). Also appears to be involved in tRNA biosynthesis. In Enterobacter sp. (strain 638), this protein is Ribonuclease T.